Reading from the N-terminus, the 375-residue chain is Tubulinyl-Tyr carboxypeptidase 1 (375 aa).

Low complexity predominate over residues 1–33; the sequence is MPGGKKVVPSGSSSASPNAAATTTAAAAAAAAA. Residues 1–69 are disordered; the sequence is MPGGKKVVPS…EEDLRDGGVP (69 aa). Residues 53–63 show a composition bias toward acidic residues; sequence EEPEEEGEEDL. Active-site residues include C179, H214, and S231. Residues 309 to 375 are disordered; that stretch reads RDMRLKIGKG…PDLSGYQIRV (67 aa). The interval 329-375 is involved in heparin-binding and antiangiogenic activity; sequence KKDVSSPQRAQSSPHRRNSRSERRPSGEKKPAEPKAMPDLSGYQIRV. Residues 347 to 361 show a composition bias toward basic and acidic residues; sequence SRSERRPSGEKKPAE.

This sequence belongs to the transglutaminase-like superfamily. Vasohibin family. In terms of assembly, interacts with SVBP; interaction enhances VASH1 tyrosine carboxypeptidase activity. In terms of processing, ubiquitinated in vitro. In terms of tissue distribution, expressed at low level in proliferating endothelial cells at the sprouting front but highly expressed in nonproliferating endothelial cells in the termination zone.

It is found in the cytoplasm. Its subcellular location is the secreted. The enzyme catalyses C-terminal L-alpha-aminoacyl-L-glutamyl-L-glutamyl-L-tyrosyl-[tubulin] + H2O = C-terminal L-alpha-aminoacyl-L-glutamyl-L-glutamyl-[tubulin] + L-tyrosine. Tyrosine carboxypeptidase that removes the C-terminal tyrosine residue of alpha-tubulin, thereby regulating microtubule dynamics and function. Acts as an angiogenesis inhibitor: inhibits migration, proliferation and network formation by endothelial cells as well as angiogenesis. This inhibitory effect is selective to endothelial cells as it does not affect the migration of smooth muscle cells or fibroblasts. This Mus musculus (Mouse) protein is Tubulinyl-Tyr carboxypeptidase 1.